Consider the following 287-residue polypeptide: MAGAKEIRSKIASVQNTQKITKAMEMVAASKMRKTQDRMAASRPYAETMRKVIGHLALGNLEYKHPYLEERDIKRVGYLVVSTDRGLCGGLNINLFKKLLTEMKEWNQKGVDIDLALIGSKAVSFFGSVGGNVVAQVTGMGDNPSLSELIGPVKVMLQAYDEGRLDRLYVVSNKFINTMSQEPQVIQLLPLPKADDAELKRKSWDYLYEPDPKALLDTLLRRYVESQVYQGVVENLASEQAARMVAMKAATDNGGNLIKELQLVYNKARQASITQELTEIVSGAAAV.

This sequence belongs to the ATPase gamma chain family. F-type ATPases have 2 components, CF(1) - the catalytic core - and CF(0) - the membrane proton channel. CF(1) has five subunits: alpha(3), beta(3), gamma(1), delta(1), epsilon(1). CF(0) has three main subunits: a, b and c.

It is found in the cell inner membrane. Functionally, produces ATP from ADP in the presence of a proton gradient across the membrane. The gamma chain is believed to be important in regulating ATPase activity and the flow of protons through the CF(0) complex. This chain is ATP synthase gamma chain, found in Edwardsiella ictaluri (strain 93-146).